A 520-amino-acid chain; its full sequence is Acetyltransferase MAT1 (520 aa).

Active-site proton acceptor residues include His183 and Asp456.

This sequence belongs to the plant acyltransferase family.

The protein operates within secondary metabolite biosynthesis. Acyl-CoA-dependent acyltransferase; part of the gene cluster that mediates the biosynthesis of mannosylerythritol lipids (MELs), surface-active substances that enhance the availability of water-insoluble substrates. Depending on the number of acetyl groups, mannosylerythritol lipids can be differentiated into MEL A (fully acetylated), MEL B and MEL C (monoacetylated at R-6 and R-4, respectively), and the fully deacetylated MEL D. The first step in the pathway is the generation of mannosylerythritol by the glycosyltransferase EMT1 which catalyzes the transfer of GDP-mannose to the C-4 atom of meso-erythritol. This reaction has to be stereospecific, since only mannosyl-D-erythritol is generated. The produced disaccharide is subsequently acylated with fatty acids of various lengths by the acyltransferases MAC1 and MAC2 at positions C-2 and C-3, repectively. The existence of MEL derivatives which carry an acetyl group at C-2 implies that at least MAC1 also accepts acetyl-CoA as a donor. The final step of MEL biosynthesis is the acetylation of the fully acylated mannosylerythritol lipids catalyzed by the acetyl-CoA-dependent acetyltransferase MAT1. MAT1 displays a relaxed regioselectivity and is able to transfer acetylgroups to both positions C-4 and C-6 of the mannosyl moiety. The chain is Acetyltransferase MAT1 from Pseudozyma antarctica (strain T-34) (Yeast).